Reading from the N-terminus, the 356-residue chain is MTCEQKSRPVQSCQMLPDVVSNEQQSLVLVKKLLAIAISSITYLRGLFSEKAYGRKYVGELKVYILREDSCPGAQQIVHWLQGCFDALQRRYLRMVLLSIYCDPDNPQKVTECYQFKIKYTEKGPQMDFESKNGQSLTKMACDNTQKSSMLLVRKLYMLMQNLGPLPDDVCLNMKLLYYDEVTPQEYQPPGFKEDDNGTLMFEREPVNLTMGEVVTPFHSIKMNVTTEKKRIEPFEDDVEVCVSTKWSLKISEDGMMSETSVQQECMTKENVITDAGIEYSETQETQEQPHRHTKEDFSTNPKMDNLVKKTADLKVDARKTRSGRIFEPQISQLEFPLSQDPQPSVPKRRKVSVPK.

Residues 24–225 enclose the HORMA domain; that stretch reads QQSLVLVKKL…TPFHSIKMNV (202 aa). 2 disordered regions span residues 282 to 305 and 333 to 356; these read ETQE…PKMD and QLEF…SVPK. Positions 288-298 are enriched in basic and acidic residues; the sequence is EQPHRHTKEDF. Basic residues predominate over residues 347-356; the sequence is PKRRKVSVPK.

Its subcellular location is the nucleus. It localises to the chromosome. Plays a key role in meiotic progression by ensuring that sufficient numbers of processed DNA double-strand breaks (DSBs) are available for successful homology search, promoting synaptonemal-complex formation independently and playing key role in the male mid-pachytene checkpoint and the female meiotic prophase checkpoint. This is HORMA domain-containing protein 1 (hormad1) from Danio rerio (Zebrafish).